The chain runs to 372 residues: Alanine dehydrogenase 2 (372 aa).

The active site involves H95. NAD(+) is bound at residue 169-199 (KVTIIGGGQAGTNAAKIALGLGADVTILDVN).

The protein belongs to the AlaDH/PNT family.

The enzyme catalyses L-alanine + NAD(+) + H2O = pyruvate + NH4(+) + NADH + H(+). The protein operates within amino-acid degradation; L-alanine degradation via dehydrogenase pathway; NH(3) and pyruvate from L-alanine: step 1/1. Its function is as follows. May play a role in cell wall synthesis as L-alanine is an important constituent of the peptidoglycan layer. In Staphylococcus aureus (strain COL), this protein is Alanine dehydrogenase 2 (ald2).